A 510-amino-acid polypeptide reads, in one-letter code: ATP synthase subunit alpha (510 aa).

169–176 (GDRQTGKT) provides a ligand contact to ATP.

Belongs to the ATPase alpha/beta chains family. F-type ATPases have 2 components, CF(1) - the catalytic core - and CF(0) - the membrane proton channel. CF(1) has five subunits: alpha(3), beta(3), gamma(1), delta(1), epsilon(1). CF(0) has three main subunits: a(1), b(2) and c(9-12). The alpha and beta chains form an alternating ring which encloses part of the gamma chain. CF(1) is attached to CF(0) by a central stalk formed by the gamma and epsilon chains, while a peripheral stalk is formed by the delta and b chains.

It is found in the cell inner membrane. It carries out the reaction ATP + H2O + 4 H(+)(in) = ADP + phosphate + 5 H(+)(out). Functionally, produces ATP from ADP in the presence of a proton gradient across the membrane. The alpha chain is a regulatory subunit. In Anaeromyxobacter sp. (strain K), this protein is ATP synthase subunit alpha.